The sequence spans 608 residues: Bifunctional dihydrofolate reductase-thymidylate synthase (608 aa).

Residues 10–228 form the DHFR domain; that stretch reads DIYAICACCK…TTLDFIIYKK (219 aa). 14-15 is a substrate binding site; it reads IC. Residue alanine 16 participates in NADP(+) binding. Substrate is bound at residue valine 31. Position 39-45 (39-45) interacts with NADP(+); the sequence is GLGNKGV. Residues aspartate 54 and asparagine 108 each coordinate substrate. Residues 106–108, 128–130, and asparagine 144 contribute to the NADP(+) site; these read RTN and SRT. Residues isoleucine 164, tyrosine 170, and threonine 185 each contribute to the substrate site. 165–172 provides a ligand contact to NADP(+); sequence GGSVVYQE. A thymidylate synthase region spans residues 322 to 608; it reads YHPEYQYLNI…HEKISMDMAA (287 aa). Residue arginine 345 participates in dUMP binding. The active site involves cysteine 490. Residues histidine 491, 509-513, asparagine 521, and 551-553 contribute to the dUMP site; these read QRSCD and HVY.

In the N-terminal section; belongs to the dihydrofolate reductase family. The protein in the C-terminal section; belongs to the thymidylate synthase family. Homodimer.

The catalysed reaction is (6S)-5,6,7,8-tetrahydrofolate + NADP(+) = 7,8-dihydrofolate + NADPH + H(+). It catalyses the reaction dUMP + (6R)-5,10-methylene-5,6,7,8-tetrahydrofolate = 7,8-dihydrofolate + dTMP. It participates in cofactor biosynthesis; tetrahydrofolate biosynthesis; 5,6,7,8-tetrahydrofolate from 7,8-dihydrofolate: step 1/1. Its function is as follows. Bifunctional enzyme. Involved in de novo dTMP biosynthesis. Key enzyme in folate metabolism. Catalyzes an essential reaction for de novo glycine and purine synthesis, DNA precursor synthesis, and for the conversion of dUMP to dTMP. This chain is Bifunctional dihydrofolate reductase-thymidylate synthase, found in Plasmodium falciparum (isolate K1 / Thailand).